The sequence spans 597 residues: MVLSNKKLKQRIRQDLAESLSVSVSETNPQSQSLKLLLDSSSHKPRLSKREKRRNCETFAREDDEIRENEVGNGGSSEKTDTKIKKKRKRDDAVEVDELEGDEGTKEEQKPQKKKNKKKKKKRKVNKTPKKAEEGNVEEKVKVEEIEVNTDNKEEDGVVPNKLYVGGIPYQSTEDEIRSYFRSCGVIIKVDCKMRPEDGAFSGIAFITFDTEDGAKRALAFDRAAMGDRYLTIQQYVKTTTPSIPRRKTSSGFAPEMVDGYNRVYIGNLAWDTTERDIRKLFSDCVINSVRLGKNKETGEFKGYAHVDFKDSVSVAIALKLDQQVICGRPVKICCALKDRPATDHTPGETNNAGSYNMEDTYAAADPVPALAGRSEVDDGNYFATTVSSSKVKRRVCYECGEKGHLSTACPIKLQKADDQANSKLGQETVDGRPAMQSYGLPKNSGDSYYMNETYASTNETYNGGYSASAVGTGKVKRRNCYECGEKGHLSTACPIKLQNTSHTNSTLDHQTVEAGPTQVTSYSLQKKTRDTENNGGSFMDESYATVPISIDVTNGANDASLTSAVSTGKIKKRNCYECGEKGHLSSACPNKLQKQG.

Residues 18–136 (ESLSVSVSET…KTPKKAEEGN (119 aa)) are disordered. The span at 20 to 29 (LSVSVSETNP) shows a compositional bias: polar residues. The span at 30–40 (QSQSLKLLLDS) shows a compositional bias: low complexity. Composition is skewed to basic residues over residues 43-53 (HKPRLSKREKR) and 112-129 (QKKK…NKTP). Residues 112–119 (QKKKNKKK) carry the Nuclear localization signal motif. RRM domains are found at residues 161-238 (NKLY…QYVK) and 262-338 (NRVY…CALK). 3 consecutive CCHC-type zinc fingers follow at residues 397 to 411 (CYEC…TACP), 481 to 495 (CYEC…TACP), and 576 to 591 (CYEC…ACPN).

As to quaternary structure, interacts with phragmoplastins (e.g. DRP1A, DRP1B, DRP1C, DRP1D and DRP1E) and with GTP-bound ARAC11/ROP1 as well as with Ran2 transcripts.

The protein resides in the nucleus. Its subcellular location is the cell membrane. The protein localises to the cytoplasm. It localises to the cytoskeleton. It is found in the phragmoplast. RNA-binding protein which mediates polarized mRNA (e.g. Ran2 transcripts mRNA) transport from the nucleus to the vicinity of the cell plate during cytokinesis and phragmoplast formation. This chain is Phragmoplastin interacting protein 1, found in Arabidopsis thaliana (Mouse-ear cress).